The primary structure comprises 1416 residues: DNA-directed RNA polymerase subunit beta (1416 aa).

This sequence belongs to the RNA polymerase beta chain family. In plastids the minimal PEP RNA polymerase catalytic core is composed of four subunits: alpha, beta, beta', and beta''. When a (nuclear-encoded) sigma factor is associated with the core the holoenzyme is formed, which can initiate transcription.

Its subcellular location is the plastid. It localises to the chloroplast. It carries out the reaction RNA(n) + a ribonucleoside 5'-triphosphate = RNA(n+1) + diphosphate. In terms of biological role, DNA-dependent RNA polymerase catalyzes the transcription of DNA into RNA using the four ribonucleoside triphosphates as substrates. The chain is DNA-directed RNA polymerase subunit beta from Oltmannsiellopsis viridis (Marine flagellate).